A 485-amino-acid chain; its full sequence is Glutamyl-tRNA(Gln) amidotransferase subunit A (485 aa).

Active-site charge relay system residues include Lys-76 and Ser-151. The Acyl-ester intermediate role is filled by Ser-175.

This sequence belongs to the amidase family. GatA subfamily. As to quaternary structure, heterotrimer of A, B and C subunits.

It carries out the reaction L-glutamyl-tRNA(Gln) + L-glutamine + ATP + H2O = L-glutaminyl-tRNA(Gln) + L-glutamate + ADP + phosphate + H(+). Allows the formation of correctly charged Gln-tRNA(Gln) through the transamidation of misacylated Glu-tRNA(Gln) in organisms which lack glutaminyl-tRNA synthetase. The reaction takes place in the presence of glutamine and ATP through an activated gamma-phospho-Glu-tRNA(Gln). This chain is Glutamyl-tRNA(Gln) amidotransferase subunit A, found in Thiobacillus denitrificans (strain ATCC 25259 / T1).